The sequence spans 510 residues: MQLRLGEPPLTQAECALVYCFAPSGENATFSLPAEIASLDEKVWSGLVAEAAQEQKFQGKPNSSLALRLPGPIRKLVLVGLGDPAALTLEALRRATANGLRQAHSLKAKQVVLSLPDTGLDQVRAVQAVAEASLLVAHQDNRFKSPPKPEEERGFSVEEVTLLVPGLAQARQDYENALQRATEMAAGTILARELVAAPANVVTPPALAETARQLAQDYGLEVEILGREECQALGMGAFLGVAQASDLPPQFIHLTYKPKEGDPVAKLALVGKGLTFDSGGLNIKTDSRSIAMMKTDMGGAAAVLGAARALAALKPQVEVHFIVAATENMISGRALHPGDILTASNGKTIEVNNTDAEGRLTLADALVFAEKLGVDAIVDLATLTGACVIALGEEIAGLFTPDEKLAQELQQAANLSGEKIWRLPLEESYFEGLSSTVADMKNTGPRSGGSITAALFLKQFVEKTPWAHLDIAGPVWAEKDSGYTNKGATGYGVRTLVEWVLAREMAAASS.

Mn(2+) is bound by residues Lys272 and Asp277. Lys284 is an active-site residue. Mn(2+) is bound by residues Asp296, Asp355, and Glu357. Arg359 is an active-site residue.

It belongs to the peptidase M17 family. The cofactor is Mn(2+).

It localises to the cytoplasm. The enzyme catalyses Release of an N-terminal amino acid, Xaa-|-Yaa-, in which Xaa is preferably Leu, but may be other amino acids including Pro although not Arg or Lys, and Yaa may be Pro. Amino acid amides and methyl esters are also readily hydrolyzed, but rates on arylamides are exceedingly low.. It catalyses the reaction Release of an N-terminal amino acid, preferentially leucine, but not glutamic or aspartic acids.. Its function is as follows. Presumably involved in the processing and regular turnover of intracellular proteins. Catalyzes the removal of unsubstituted N-terminal amino acids from various peptides. The chain is Probable cytosol aminopeptidase from Synechococcus sp. (strain JA-3-3Ab) (Cyanobacteria bacterium Yellowstone A-Prime).